A 166-amino-acid chain; its full sequence is D-aminoacyl-tRNA deacylase (166 aa).

Residues 142-143 (GP) carry the Gly-cisPro motif, important for rejection of L-amino acids motif.

Belongs to the DTD family. In terms of assembly, homodimer.

It localises to the cytoplasm. The enzyme catalyses glycyl-tRNA(Ala) + H2O = tRNA(Ala) + glycine + H(+). It catalyses the reaction a D-aminoacyl-tRNA + H2O = a tRNA + a D-alpha-amino acid + H(+). Functionally, an aminoacyl-tRNA editing enzyme that deacylates mischarged D-aminoacyl-tRNAs. Also deacylates mischarged glycyl-tRNA(Ala), protecting cells against glycine mischarging by AlaRS. Acts via tRNA-based rather than protein-based catalysis; rejects L-amino acids rather than detecting D-amino acids in the active site. By recycling D-aminoacyl-tRNA to D-amino acids and free tRNA molecules, this enzyme counteracts the toxicity associated with the formation of D-aminoacyl-tRNA entities in vivo and helps enforce protein L-homochirality. This is D-aminoacyl-tRNA deacylase from Ralstonia nicotianae (strain ATCC BAA-1114 / GMI1000) (Ralstonia solanacearum).